A 31-amino-acid chain; its full sequence is uncharacterized protein (31 aa).

This is an uncharacterized protein from Archaeoglobus fulgidus (strain ATCC 49558 / DSM 4304 / JCM 9628 / NBRC 100126 / VC-16).